The sequence spans 562 residues: Protein wntless (562 aa).

Over 1-15 (MSGTILENLSGRKLS) the chain is Cytoplasmic. The helical transmembrane segment at 16 to 36 (ILVSSLMLCQVVCFLMGGLFA) threads the bilayer. At 37–239 (PVPAGHQTVL…AIHQNGGFTQ (203 aa)) the chain is on the lumenal side. N-linked (GlcNAc...) asparagine glycans are attached at residues asparagine 58 and asparagine 103. The helical transmembrane segment at 240 to 260 (VWLVLKTLLFPFVIGIMMWFW) threads the bilayer. Residues 261–275 (RRVHILQRSPALLEY) lie on the Cytoplasmic side of the membrane. A helical transmembrane segment spans residues 276-296 (MLFYLGGALSFLNLPLELLTL). Topologically, residues 297–311 (GVEMPYMLLLSDVRQ) are lumenal. The helical transmembrane segment at 312–332 (GIFYAMLLSFWLVFAGEHMLI) threads the bilayer. Topologically, residues 333 to 344 (QDSPSKSTIRSR) are cytoplasmic. The helical transmembrane segment at 345–365 (YWKHLSAVVVGCISLFVFDIC) threads the bilayer. Topologically, residues 366–390 (ERGVQMRNPFYSIWTTPLGAKVAMS) are lumenal. Residues 391 to 411 (FIVLAGVSAAIYFLFLCFMVW) form a helical membrane-spanning segment. Residues 412–441 (KVFKDIGDKRTSLPSMSQARRLHYEGLIYR) lie on the Cytoplasmic side of the membrane. A helical transmembrane segment spans residues 442–462 (FKFLMLATLLCAGLTVAGFIM). Topologically, residues 463 to 482 (GQMAEGHWKWNENIEIQLTS) are lumenal. Residues 483-503 (AFLTGVYGMWNIYIFALIILY) form a helical membrane-spanning segment. The Cytoplasmic portion of the chain corresponds to 504–562 (APSHKQWPTMRHSDETTQSNENIVASAASEEIEFSNLPSDSNPSEISSLTSFTRKVAFD).

Belongs to the wntless family. In terms of assembly, interacts with wg; in the Golgi. Interacts with Vps35, a component of the retromer complex; wls stability is regulated by Vps35.

It localises to the presynaptic cell membrane. The protein resides in the postsynaptic cell membrane. It is found in the cell membrane. Its subcellular location is the endoplasmic reticulum membrane. The protein localises to the endosome membrane. It localises to the golgi apparatus membrane. In terms of biological role, a segment polarity gene required for wingless (wg)-dependent patterning processes, acting in both wg-sending cells and wg-target cells. In non-neuronal cells wls directs wg secretion. The wls traffic loop encompasses the Golgi, the cell surface, an endocytic compartment and a retrograde route leading back to the Golgi, and involves clathrin-mediated endocytosis and the retromer complex (a conserved protein complex consisting of Vps35 and Vps26). In neuronal cells (the larval motorneuron NMJ), the wg signal moves across the synapse via the release of wls-containing exosome-like vesicles. Postsynaptic wls is required for the trafficking of fz2 through the fz2-interacting protein Grip. The polypeptide is Protein wntless (Drosophila grimshawi (Hawaiian fruit fly)).